The chain runs to 246 residues: Probable transcriptional regulatory protein GWCH70_2524 (246 aa).

Belongs to the TACO1 family.

It is found in the cytoplasm. This chain is Probable transcriptional regulatory protein GWCH70_2524, found in Geobacillus sp. (strain WCH70).